A 380-amino-acid polypeptide reads, in one-letter code: Alkanesulfonate monooxygenase (380 aa).

It belongs to the SsuD family. As to quaternary structure, homotetramer.

It catalyses the reaction an alkanesulfonate + FMNH2 + O2 = an aldehyde + FMN + sulfite + H2O + 2 H(+). In terms of biological role, catalyzes the desulfonation of aliphatic sulfonates. This chain is Alkanesulfonate monooxygenase, found in Pectobacterium carotovorum subsp. carotovorum (strain PC1).